A 449-amino-acid chain; its full sequence is Adenylyltransferase and sulfurtransferase MOCS3 (449 aa).

ATP-binding positions include glycine 96, aspartate 117, 124 to 128 (SNLHR), lysine 141, and 185 to 186 (DN). Zn(2+)-binding residues include cysteine 227 and cysteine 230. Cysteine 244 functions as the Glycyl thioester intermediate; for adenylyltransferase activity in the catalytic mechanism. Residues cysteine 302 and cysteine 305 each coordinate Zn(2+). In terms of domain architecture, Rhodanese spans 351–447 (QDKPHLLLDV…WTNQIDENFP (97 aa)). Cysteine 406 serves as the catalytic Cysteine persulfide intermediate; for sulfurtransferase activity.

The protein in the N-terminal section; belongs to the HesA/MoeB/ThiF family. UBA4 subfamily. Requires Zn(2+) as cofactor.

Its subcellular location is the cytoplasm. The protein localises to the cytosol. It catalyses the reaction [molybdopterin-synthase sulfur-carrier protein]-C-terminal Gly-Gly + ATP + H(+) = [molybdopterin-synthase sulfur-carrier protein]-C-terminal Gly-Gly-AMP + diphosphate. It carries out the reaction [molybdopterin-synthase sulfur-carrier protein]-C-terminal Gly-Gly-AMP + S-sulfanyl-L-cysteinyl-[cysteine desulfurase] + AH2 = [molybdopterin-synthase sulfur-carrier protein]-C-terminal-Gly-aminoethanethioate + L-cysteinyl-[cysteine desulfurase] + A + AMP + 2 H(+). It functions in the pathway tRNA modification; 5-methoxycarbonylmethyl-2-thiouridine-tRNA biosynthesis. It participates in cofactor biosynthesis; molybdopterin biosynthesis. Its function is as follows. Plays a central role in 2-thiolation of mcm(5)S(2)U at tRNA wobble positions of cytosolic tRNA(Lys), tRNA(Glu) and tRNA(Gln). Also essential during biosynthesis of the molybdenum cofactor. Acts by mediating the C-terminal thiocarboxylation of sulfur carriers URM1 and MOCS2A. Its N-terminus first activates URM1 and MOCS2A as acyl-adenylates (-COAMP), then the persulfide sulfur on the catalytic cysteine is transferred to URM1 and MOCS2A to form thiocarboxylation (-COSH) of their C-terminus. The reaction probably involves hydrogen sulfide that is generated from the persulfide intermediate and that acts as a nucleophile towards URM1 and MOCS2A. Subsequently, a transient disulfide bond is formed. Does not use thiosulfate as sulfur donor; NFS1 probably acting as a sulfur donor for thiocarboxylation reactions. This is Adenylyltransferase and sulfurtransferase MOCS3 from Drosophila grimshawi (Hawaiian fruit fly).